We begin with the raw amino-acid sequence, 485 residues long: Rhamnulokinase (485 aa).

ATP is bound at residue 8 to 12; that stretch reads ASSGR. Substrate is bound by residues glycine 78 and 231 to 233; that span reads HDT. The Proton acceptor role is filled by aspartate 232. Threonine 254 contacts ATP. Asparagine 291 contributes to the substrate binding site. Glutamine 299 is an ATP binding site. Cysteines 348 and 365 form a disulfide. Residue glycine 397 participates in ATP binding. Cysteine 408 and cysteine 412 form a disulfide bridge.

Belongs to the rhamnulokinase family. Mg(2+) serves as cofactor.

The catalysed reaction is L-rhamnulose + ATP = L-rhamnulose 1-phosphate + ADP + H(+). Its pathway is carbohydrate degradation; L-rhamnose degradation; glycerone phosphate from L-rhamnose: step 2/3. Involved in the catabolism of L-rhamnose (6-deoxy-L-mannose). Catalyzes the transfer of the gamma-phosphate group from ATP to the 1-hydroxyl group of L-rhamnulose to yield L-rhamnulose 1-phosphate. The chain is Rhamnulokinase from Yersinia pestis bv. Antiqua (strain Angola).